A 212-amino-acid chain; its full sequence is Molybdenum cofactor guanylyltransferase (212 aa).

Residues 14-16 (LAG), lysine 27, asparagine 55, aspartate 73, and aspartate 108 contribute to the GTP site. Aspartate 108 provides a ligand contact to Mg(2+).

This sequence belongs to the MobA family. In terms of assembly, monomer. Mg(2+) is required as a cofactor.

It is found in the cytoplasm. It catalyses the reaction Mo-molybdopterin + GTP + H(+) = Mo-molybdopterin guanine dinucleotide + diphosphate. In terms of biological role, transfers a GMP moiety from GTP to Mo-molybdopterin (Mo-MPT) cofactor (Moco or molybdenum cofactor) to form Mo-molybdopterin guanine dinucleotide (Mo-MGD) cofactor. In Bradyrhizobium sp. (strain ORS 278), this protein is Molybdenum cofactor guanylyltransferase.